Here is a 155-residue protein sequence, read N- to C-terminus: Small ribosomal subunit protein uS17 (155 aa).

It belongs to the universal ribosomal protein uS17 family. As to quaternary structure, component of the small ribosomal subunit. Mature ribosomes consist of a small (40S) and a large (60S) subunit. The 40S subunit contains about 32 different proteins and 1 molecule of RNA (18S). The 60S subunit contains 45 different proteins and 3 molecules of RNA (25S, 5.8S and 5S).

The protein localises to the cytoplasm. In terms of biological role, component of the ribosome, a large ribonucleoprotein complex responsible for the synthesis of proteins in the cell. The small ribosomal subunit (SSU) binds messenger RNAs (mRNAs) and translates the encoded message by selecting cognate aminoacyl-transfer RNA (tRNA) molecules. The large subunit (LSU) contains the ribosomal catalytic site termed the peptidyl transferase center (PTC), which catalyzes the formation of peptide bonds, thereby polymerizing the amino acids delivered by tRNAs into a polypeptide chain. The nascent polypeptides leave the ribosome through a tunnel in the LSU and interact with protein factors that function in enzymatic processing, targeting, and the membrane insertion of nascent chains at the exit of the ribosomal tunnel. The protein is Small ribosomal subunit protein uS17 of Candida albicans (strain SC5314 / ATCC MYA-2876) (Yeast).